We begin with the raw amino-acid sequence, 312 residues long: Ribosomal protein L11 methyltransferase (312 aa).

Positions 162, 183, 205, and 248 each coordinate S-adenosyl-L-methionine.

The protein belongs to the methyltransferase superfamily. PrmA family.

The protein resides in the cytoplasm. It catalyses the reaction L-lysyl-[protein] + 3 S-adenosyl-L-methionine = N(6),N(6),N(6)-trimethyl-L-lysyl-[protein] + 3 S-adenosyl-L-homocysteine + 3 H(+). Its function is as follows. Methylates ribosomal protein L11. The chain is Ribosomal protein L11 methyltransferase from Geobacillus thermodenitrificans (strain NG80-2).